Reading from the N-terminus, the 284-residue chain is 4-diphosphocytidyl-2-C-methyl-D-erythritol kinase (284 aa).

Lys-14 is a catalytic residue. 98–108 (PMGGGLGGGSS) is a binding site for ATP. The active site involves Asp-140.

It belongs to the GHMP kinase family. IspE subfamily.

The enzyme catalyses 4-CDP-2-C-methyl-D-erythritol + ATP = 4-CDP-2-C-methyl-D-erythritol 2-phosphate + ADP + H(+). The protein operates within isoprenoid biosynthesis; isopentenyl diphosphate biosynthesis via DXP pathway; isopentenyl diphosphate from 1-deoxy-D-xylulose 5-phosphate: step 3/6. Catalyzes the phosphorylation of the position 2 hydroxy group of 4-diphosphocytidyl-2C-methyl-D-erythritol. This Shewanella sp. (strain MR-4) protein is 4-diphosphocytidyl-2-C-methyl-D-erythritol kinase.